Here is a 362-residue protein sequence, read N- to C-terminus: Methionine import ATP-binding protein MetN (362 aa).

Residues Ile-2–Val-241 form the ABC transporter domain. Gly-38–Ser-45 contacts ATP.

It belongs to the ABC transporter superfamily. Methionine importer (TC 3.A.1.24) family. The complex is composed of two ATP-binding proteins (MetN), two transmembrane proteins (MetI) and a solute-binding protein (MetQ).

Its subcellular location is the cell inner membrane. It carries out the reaction L-methionine(out) + ATP + H2O = L-methionine(in) + ADP + phosphate + H(+). The catalysed reaction is D-methionine(out) + ATP + H2O = D-methionine(in) + ADP + phosphate + H(+). Functionally, part of the ABC transporter complex MetNIQ involved in methionine import. Responsible for energy coupling to the transport system. The sequence is that of Methionine import ATP-binding protein MetN from Bordetella avium (strain 197N).